The following is a 201-amino-acid chain: Small ribosomal subunit protein uS4c (201 aa).

The disordered stretch occupies residues 15–43 (LGALPGLTSKRPRPGSDLRNQSRSGKRSQ). Residues 89–150 (MRLDNILFRL…EQRSRALIQN (62 aa)) form the S4 RNA-binding domain.

Belongs to the universal ribosomal protein uS4 family. In terms of assembly, part of the 30S ribosomal subunit. Contacts protein S5. The interaction surface between S4 and S5 is involved in control of translational fidelity.

It localises to the plastid. The protein localises to the chloroplast. One of the primary rRNA binding proteins, it binds directly to 16S rRNA where it nucleates assembly of the body of the 30S subunit. In terms of biological role, with S5 and S12 plays an important role in translational accuracy. This is Small ribosomal subunit protein uS4c (rps4) from Liriodendron tulipifera (Tuliptree).